We begin with the raw amino-acid sequence, 558 residues long: Phosphatidylserine lipase ABHD16A (558 aa).

Transmembrane regions (helical) follow at residues 60–80 (ILAL…FAFF) and 93–113 (VVPF…VACL). The Cytoplasmic portion of the chain corresponds to 114–558 (RGIGRWTNPQ…AQNFQMPWHL (445 aa)). In terms of domain architecture, AB hydrolase-1 spans 281 to 407 (LVICCEGNAG…LVTRTVRQHL (127 aa)). Residues S355, D430, and H507 each act as charge relay system in the active site.

This sequence belongs to the AB hydrolase superfamily. ABHD16 family.

Its subcellular location is the membrane. The catalysed reaction is 1-heptadecanoyl-2-(5Z,8Z,11Z,14Z-eicosatetraenoyl)-sn-glycero-3-phosphoserine + H2O = 1-heptadecanoyl-sn-glycero-3-phosphoserine + (5Z,8Z,11Z,14Z)-eicosatetraenoate + H(+). The enzyme catalyses 1-hexadecanoyl-2-(9Z-octadecenoyl)-sn-glycero-3-phospho-L-serine + H2O = 1-hexadecanoyl-sn-glycero-3-phospho-L-serine + (9Z)-octadecenoate + H(+). It carries out the reaction 1-octadecanoyl-2-(9Z,12Z-octadecadienoyl)-sn-glycero-3-phosphoserine + H2O = 1-octadecanoyl-sn-glycero-3-phosphoserine + (9Z,12Z)-octadecadienoate + H(+). It catalyses the reaction 1-heptadecanoyl-2-(5Z,8Z,11Z,14Z-eicosatetraenoyl)-sn-glycero-3-phosphocholine + H2O = 1-heptadecanoyl-sn-glycero-3-phosphocholine + (5Z,8Z,11Z,14Z)-eicosatetraenoate + H(+). The catalysed reaction is 1-hexadecanoyl-2-(9Z-octadecenoyl)-sn-glycero-3-phosphoglycerol + H2O = 1-hexadecanoyl-sn-glycero-3-phosphoglycerol + (9Z)-octadecenoate + H(+). The enzyme catalyses 1-hexadecanoyl-2-(9Z-octadecenoyl)-sn-glycero-3-phospho-(1D-myo-inositol) + H2O = 1-hexadecanoyl-sn-glycero-3-phospho-(1D-myo-inositol) + (9Z)-octadecenoate + H(+). It carries out the reaction 1-heptadecanoyl-2-(5Z,8Z,11Z,14Z-eicosatetraenoyl)-sn-glycero-3-phosphoethanolamine + H2O = 1-heptadecanoyl-sn-glycero-3-phosphoethanolamine + (5Z,8Z,11Z,14Z)-eicosatetraenoate + H(+). It catalyses the reaction 1-hexadecanoyl-2-(9Z-octadecenoyl)-sn-glycero-3-phospho-(1'-sn-glycerol) + H2O = 1-hexadecanoyl-sn-glycero-3-phospho-(1'-sn-glycerol) + (9Z)-octadecenoate + H(+). The catalysed reaction is Hydrolyzes glycerol monoesters of long-chain fatty acids.. The enzyme catalyses 1-tetradecanoylglycerol + H2O = tetradecanoate + glycerol + H(+). It carries out the reaction 2-hexadecanoylglycerol + H2O = glycerol + hexadecanoate + H(+). It catalyses the reaction 1-(9Z-octadecenoyl)-glycerol + H2O = glycerol + (9Z)-octadecenoate + H(+). The catalysed reaction is 2-(9Z-octadecenoyl)-glycerol + H2O = glycerol + (9Z)-octadecenoate + H(+). The enzyme catalyses 2-(9Z,12Z-octadecadienoyl)-glycerol + H2O = (9Z,12Z)-octadecadienoate + glycerol + H(+). It carries out the reaction 1-(5Z,8Z,11Z,14Z-eicosatetraenoyl)-glycerol + H2O = glycerol + (5Z,8Z,11Z,14Z)-eicosatetraenoate + H(+). It catalyses the reaction 2-(5Z,8Z,11Z,14Z-eicosatetraenoyl)-glycerol + H2O = glycerol + (5Z,8Z,11Z,14Z)-eicosatetraenoate + H(+). The catalysed reaction is prostaglandin D2-1-glycerol ester + H2O = prostaglandin D2 + glycerol + H(+). The enzyme catalyses 2-glyceryl-15-deoxy-Delta(12,14)-prostaglandin J2 + H2O = 15-deoxy-Delta(12,14)-prostaglandin J2 + glycerol + H(+). It carries out the reaction 1-(9Z,12Z-octadecadienoyl)-glycerol + H2O = (9Z,12Z)-octadecadienoate + glycerol + H(+). Phosphatidylserine (PS) lipase that mediates the hydrolysis of phosphatidylserine to generate lysophosphatidylserine (LPS). LPS constitutes a class of signaling lipids that regulates immunological and neurological processes. Has no activity towards diacylglycerol, triacylglycerol or lysophosphatidylserine lipase. Also has monoacylglycerol lipase activity, with preference for 1-(9Z,12Z-octadecadienoyl)-glycerol (1-LG) and 2-glyceryl-15-deoxy-Delta(12,14)-prostaglandin J2 (15d-PGJ(2)-G). In Bos taurus (Bovine), this protein is Phosphatidylserine lipase ABHD16A.